The sequence spans 394 residues: UPF0229 protein RBAM_009260 (394 aa).

The protein belongs to the UPF0229 family.

In Bacillus velezensis (strain DSM 23117 / BGSC 10A6 / LMG 26770 / FZB42) (Bacillus amyloliquefaciens subsp. plantarum), this protein is UPF0229 protein RBAM_009260.